The chain runs to 160 residues: Large ribosomal subunit protein uL22c (160 aa).

It belongs to the universal ribosomal protein uL22 family. Part of the 50S ribosomal subunit.

It localises to the plastid. Its subcellular location is the chloroplast. In terms of biological role, this protein binds specifically to 23S rRNA. The globular domain of the protein is located near the polypeptide exit tunnel on the outside of the subunit, while an extended beta-hairpin is found that lines the wall of the exit tunnel in the center of the 70S ribosome. The sequence is that of Large ribosomal subunit protein uL22c (rpl22) from Aethionema grandiflorum (Persian stone-cress).